The following is a 228-amino-acid chain: Cell surface Cu-only superoxide dismutase 5 (228 aa).

The N-terminal stretch at 1 to 15 is a signal peptide; the sequence is MKYLSIFLLATFALA. Asparagine 53 carries N-linked (GlcNAc...) asparagine glycosylation. Residues histidine 75 and histidine 77 each contribute to the Cu cation site. N-linked (GlcNAc...) asparagine glycosylation is present at asparagine 86. Residues cysteine 87 and cysteine 162 are joined by a disulfide bond. A Cu cation-binding site is contributed by histidine 93. Asparagine 98 carries N-linked (GlcNAc...) asparagine glycosylation. Histidine 153 serves as a coordination point for Cu cation. Asparagine 156, asparagine 164, asparagine 176, asparagine 181, and asparagine 192 each carry an N-linked (GlcNAc...) asparagine glycan. The segment covering 176 to 201 has biased composition (low complexity); sequence NTTMSNSSSSSSQSAVNTSSSMASTA. The interval 176 to 204 is disordered; sequence NTTMSNSSSSSSQSAVNTSSSMASTAPQG. Asparagine 205 carries GPI-anchor amidated asparagine lipidation. Positions 206 to 228 are cleaved as a propeptide — removed in mature form; sequence GAERAVVNGLLAAGVVGVIAALI.

It belongs to the Cu-Zn superoxide dismutase family. As to quaternary structure, monomer. Cu cation is required as a cofactor. Post-translationally, the GPI-anchor is attached to the protein in the endoplasmic reticulum and serves to target the protein to the cell surface. There, the glucosamine-inositol phospholipid moiety is cleaved off and the GPI-modified mannoprotein is covalently attached via its lipidless GPI glycan remnant to the 1,6-beta-glucan of the outer cell wall layer.

The protein resides in the secreted. The protein localises to the cell wall. It is found in the membrane. It carries out the reaction 2 superoxide + 2 H(+) = H2O2 + O2. Secreted in a disulfide-oxidized form and apo-pools of secreted SOD5 can readily capture extracellular copper for rapid induction of enzyme activity. Superoxide dismutases serve to convert damaging superoxide radicals, a key form of ROS, to less damaging hydrogen peroxide that can be converted into water by catalase action. Degrades host-derived reactive oxygen species to escape innate immune surveillance. Involved in the occurrence of miconazole-tolerant persisters in biofilms. Persisters are cells that survive high doses of an antimicrobial agent. The unusual attributes of SOD5-like fungal proteins, including the absence of zinc and an open active site that readily captures extracellular copper, make these SODs well suited to meet challenges in zinc and copper availability at the host-pathogen interface. The chain is Cell surface Cu-only superoxide dismutase 5 (SOD5) from Candida albicans (strain SC5314 / ATCC MYA-2876) (Yeast).